A 551-amino-acid polypeptide reads, in one-letter code: Chaperonin GroEL (551 aa).

ATP contacts are provided by residues 29 to 32, lysine 50, 86 to 90, glycine 417, and aspartate 499; these read TAGP and DGTTT.

This sequence belongs to the chaperonin (HSP60) family. As to quaternary structure, forms a cylinder of 14 subunits composed of two heptameric rings stacked back-to-back. Interacts with the co-chaperonin GroES.

It localises to the cytoplasm. The catalysed reaction is ATP + H2O + a folded polypeptide = ADP + phosphate + an unfolded polypeptide.. Its function is as follows. Together with its co-chaperonin GroES, plays an essential role in assisting protein folding. The GroEL-GroES system forms a nano-cage that allows encapsulation of the non-native substrate proteins and provides a physical environment optimized to promote and accelerate protein folding. This is Chaperonin GroEL from Ehrlichia ruminantium (strain Gardel).